The following is a 60-amino-acid chain: Andropin (60 aa).

The N-terminal stretch at 1–23 is a signal peptide; the sequence is MKYFVVLVVLALILAIAVGPSDA.

Belongs to the andropin family. As to expression, ejaculatory duct of adult males.

Its subcellular location is the secreted. Functionally, male-specific peptide with moderate activity against Gram-positive bacteria. The chain is Andropin (Anp) from Drosophila simulans (Fruit fly).